The sequence spans 601 residues: Glutathione-regulated potassium-efflux system protein KefB (601 aa).

A run of 13 helical transmembrane segments spans residues Ala4–Ala24, Ile29–Phe49, Glu55–Leu75, Ile87–Met107, Phe111–Ala131, Val152–Gly172, His177–Gly197, Phe207–Ser227, Leu230–Leu250, Ala262–Leu282, Leu284–Ile304, Met324–Ala344, and Ala356–Ile376. Residues Lys400–Thr519 enclose the RCK N-terminal domain.

It belongs to the monovalent cation:proton antiporter 2 (CPA2) transporter (TC 2.A.37) family. KefB subfamily. As to quaternary structure, interacts with the regulatory subunit KefG.

The protein resides in the cell inner membrane. Functionally, pore-forming subunit of a potassium efflux system that confers protection against electrophiles. Catalyzes K(+)/H(+) antiport. This Salmonella dublin (strain CT_02021853) protein is Glutathione-regulated potassium-efflux system protein KefB.